The chain runs to 1342 residues: MVYSYTEKKRIRKDFGTRPQVLDIPYLLSIQLDSFDKFIEQDPEGQYGLEAAFRSVFPIQSYNGNSELQYVSYRLGEPVFDVKECQIRGVTYSKPLRVKLRLVIFDKDAPAGTVKDIKEQEVYMGEIPLMTDNGTFVINGTERVIVSQLHRSPGVFFDSDKGKTHSSGKVLYNARIIPYRGSWLDFEFDPKDNLYVRIDRRRKLPSTIILRALGKSTEEILDTFFEKVNFEVKDQTLMMELVPDRLRGETATFDIEANGTVYVEKGRRVTARHIRQLEKEGVDQIEVPVEYIVGKVSSKDYINEATGEIIVAANQEISLEALAKLSQAGHKQLEVLFTNDLDHGPFMSETLRIDSSVDRISALVEIYRMMRPGEPPTKEAAEALFESLFFSEERYDLSTVGRMKFNSSIGRDDAEEQGTLDETDIIEVMKKLIAIRNGKGEVDDIDHLGNRRIRSVGEMAENQFRVGLVRVERAVKERLSLGDLDAVMPQDLINAKPISAAVKEFFGSSQLSQFMDQNNPLSEVTHKRRISALGPGGLTRERAGFEVRDVHVTHYGRLCPIETPEGPNIGLINSLSAFARCNEYGFLETPYRRVVDGVVTDEVDYLSAIEEGQFVIAQANAKLNEDGTFADELITARQKGESGLHPREHVDYMDVATNQVVSIAASLIPFLEHDDANRALMGANMQRQAVPTLKAEKPLVGTGIERNVAVDSGVTSVAKRGGIIQSVDASRIVVKVNEEELIPGEAGIDIYNLTKYTRSNQNTCINQRPCVMPGEPVLRGDVLADGPSTDLGELALGQNMRIAFMPWNGYNFEDSILVSERVVQEDRFTTIHIQELTCVARDTKLGSEEITADIPNVGESALSKLDESGIVYIGAEVKGGDILVGKVTPKGETQLTPEEKLLRAIFGEKASDVKDTSLRVPNSVSGTIIDVQVFTRDGVEKDKRALEIEQMQLKEAKKDLTEEFQILEGGLLNRVKAVLLSGGYSEAKLDTTDRKKWLELTLEDDALQTQLEQLAEQYDELKADFDKKFETKRRKITQGDDLAPGVLKIVKVYLAVKRRIQPGDKMAGRHGNKGVISKINPVEDMPYDEKGQPVDIVLNPLGVPSRMNIGQILEVHLGLAAKGIGDKINQMVKEQQELAKFREFLQKVYDLGETRQKVDIASLSDEEVRTLIGNLRGGLPIATPVFDGASEASIKELLKLGGLPESGQLTLFDGRTGDAFERPVTVGYMYMLKLNHLVDDKMHARSTGSYSLVTQQPLGGKAQFGGQRFGEMEVWALEAYGAAYTLQEMLTVKSDDVNGRTKMYKNIVDGNHAMEPGMPESFNVLLKEIRSLGINIELEDEQ.

This sequence belongs to the RNA polymerase beta chain family. As to quaternary structure, the RNAP catalytic core consists of 2 alpha, 1 beta, 1 beta' and 1 omega subunit. When a sigma factor is associated with the core the holoenzyme is formed, which can initiate transcription.

The enzyme catalyses RNA(n) + a ribonucleoside 5'-triphosphate = RNA(n+1) + diphosphate. DNA-dependent RNA polymerase catalyzes the transcription of DNA into RNA using the four ribonucleoside triphosphates as substrates. The protein is DNA-directed RNA polymerase subunit beta of Vibrio vulnificus (strain CMCP6).